The sequence spans 607 residues: 1-deoxy-D-xylulose-5-phosphate synthase (607 aa).

Residues histidine 63 and 104 to 106 each bind thiamine diphosphate; that span reads GHS. Aspartate 135 contributes to the Mg(2+) binding site. Residues 136–137, asparagine 164, tyrosine 271, and glutamate 351 contribute to the thiamine diphosphate site; that span reads GA. Residue asparagine 164 participates in Mg(2+) binding.

It belongs to the transketolase family. DXPS subfamily. Homodimer. The cofactor is Mg(2+). Thiamine diphosphate is required as a cofactor.

It catalyses the reaction D-glyceraldehyde 3-phosphate + pyruvate + H(+) = 1-deoxy-D-xylulose 5-phosphate + CO2. It participates in metabolic intermediate biosynthesis; 1-deoxy-D-xylulose 5-phosphate biosynthesis; 1-deoxy-D-xylulose 5-phosphate from D-glyceraldehyde 3-phosphate and pyruvate: step 1/1. In terms of biological role, catalyzes the acyloin condensation reaction between C atoms 2 and 3 of pyruvate and glyceraldehyde 3-phosphate to yield 1-deoxy-D-xylulose-5-phosphate (DXP). This chain is 1-deoxy-D-xylulose-5-phosphate synthase, found in Campylobacter hominis (strain ATCC BAA-381 / DSM 21671 / CCUG 45161 / LMG 19568 / NCTC 13146 / CH001A).